A 395-amino-acid chain; its full sequence is Outer membrane protein assembly factor BamB (395 aa).

The N-terminal stretch at 1–20 (MKSWCKNLLAAGLSLAMLSA) is a signal peptide. Cys21 carries N-palmitoyl cysteine lipidation. The S-diacylglycerol cysteine moiety is linked to residue Cys21.

Belongs to the BamB family. In terms of assembly, part of the Bam complex.

It is found in the cell outer membrane. Functionally, part of the outer membrane protein assembly complex, which is involved in assembly and insertion of beta-barrel proteins into the outer membrane. The sequence is that of Outer membrane protein assembly factor BamB from Shewanella oneidensis (strain ATCC 700550 / JCM 31522 / CIP 106686 / LMG 19005 / NCIMB 14063 / MR-1).